Reading from the N-terminus, the 253-residue chain is Uracil-DNA glycosylase (253 aa).

The Proton acceptor role is filled by D79.

It belongs to the uracil-DNA glycosylase (UDG) superfamily. UNG family.

The protein localises to the cytoplasm. It catalyses the reaction Hydrolyzes single-stranded DNA or mismatched double-stranded DNA and polynucleotides, releasing free uracil.. In terms of biological role, excises uracil residues from the DNA which can arise as a result of misincorporation of dUMP residues by DNA polymerase or due to deamination of cytosine. This is Uracil-DNA glycosylase from Xylella fastidiosa (strain 9a5c).